A 76-amino-acid chain; its full sequence is Kappa-actitoxin-Avd4n (76 aa).

An N-terminal signal peptide occupies residues 1–19 (MNKAFFLCLVVLCAAVVFA). The propeptide occupies 20 to 31 (AEDLQKGKHAPF). 2 disulfide bridges follow: C37/C72 and C39/C65.

Belongs to the sea anemone type 3 (BDS) potassium channel toxin family. Lacks the conventional Cys residue at position 55. Thus, only 2 disulfide are possible present. In terms of tissue distribution, experimental results show no expression in the ectodermal tissue from the distal and proximal tentacles, body wall, and oral disk. Since paralogs are expressed in this tissue, an expression of this toxin in this tissue is probable. The negative results could be explained by the very low abundance of EST sequences.

The protein resides in the secreted. It localises to the nematocyst. Its function is as follows. Blocks Kv3 voltage-gated potassium channels. Reduces blood pressure. The sequence is that of Kappa-actitoxin-Avd4n from Anemonia viridis (Snakelocks anemone).